The primary structure comprises 359 residues: MENKKVIVGISGGVDSSVSALLLKQQGYDVTGVFMKNWEEDDTDEFCSAEQDIADAQAVCDSIGIPFKKINFAAEYWDNVFEHFLIEYKAGRTPNPDILCNKEIKFKAFLSYVHLLGGDYIATGHYARTRVLEDGSVQLVKGLDDNKDQTYFLYTLGQEQLRQTIFPIGNIEKSKVREIAKENNLVTFDKKDSTGICFIGERKFKEFLSKFLPAQKGEIHDENGIKIGMHDGLMYYTIGQRQGLGIGGVKDRPEVPWFAAKKDLENNVLIAVQGHDHPLLFKQSLQAIELSWVAGMAPADKFRCAAKVRYRQKDQSCEVEVNQDGSVNVTFDQPQRAITPGQSVVFYIDDVCLGGGVII.

ATP is bound by residues 9-16 and Met-35; that span reads GISGGVDS. Positions 95 to 97 are interaction with target base in tRNA; that stretch reads NPD. The Nucleophile role is filled by Cys-100. A disulfide bond links Cys-100 and Cys-197. Gly-124 lines the ATP pocket. The tract at residues 147 to 149 is interaction with tRNA; that stretch reads KDQ. Residue Cys-197 is the Cysteine persulfide intermediate of the active site. Residues 309 to 310 form an interaction with tRNA region; sequence RY.

This sequence belongs to the MnmA/TRMU family.

The protein localises to the cytoplasm. It catalyses the reaction S-sulfanyl-L-cysteinyl-[protein] + uridine(34) in tRNA + AH2 + ATP = 2-thiouridine(34) in tRNA + L-cysteinyl-[protein] + A + AMP + diphosphate + H(+). Functionally, catalyzes the 2-thiolation of uridine at the wobble position (U34) of tRNA, leading to the formation of s(2)U34. The chain is tRNA-specific 2-thiouridylase MnmA from Francisella tularensis subsp. novicida (strain U112).